Reading from the N-terminus, the 1473-residue chain is DNA topoisomerase 2 (1473 aa).

Residues 1-20 (MATKLPLQNSNAANVAKAPA) form a disordered region. A compositionally biased stretch (low complexity) spans 9–20 (NSNAANVAKAPA). Residues N91, N120, 148–150 (SSN), and 161–168 (GRNGYGAK) each bind ATP. The interval 345–347 (NKK) is interaction with DNA. Residue 378–380 (QTK) participates in ATP binding. The region spanning 455–569 (CTLILTEGDS…SLLQVPSFLV (115 aa)) is the Toprim domain. E461, D538, and D540 together coordinate Mg(2+). Residues 704–1163 (IPSMVDGLKP…TPKSLWLSDL (460 aa)) form the Topo IIA-type catalytic domain. Y794 acts as the O-(5'-phospho-DNA)-tyrosine intermediate in catalysis. The tract at residues 980-989 (KLTTTIATSN) is interaction with DNA. 3 disordered regions span residues 1195–1230 (SGAAVKVKRQAPKKPAPKKTTKKASESETTEASYSA), 1242–1297 (KPKA…EVEE), and 1313–1473 (GSAP…EDDE). 2 stretches are compositionally biased toward basic residues: residues 1200–1216 (KVKRQAPKKPAPKKTTK) and 1278–1288 (PKGRQGAKKKA). A compositionally biased stretch (low complexity) spans 1351–1360 (KPAATKAAKP). Composition is skewed to polar residues over residues 1394–1404 (SPFNKKSSSVM) and 1417–1427 (ENVAGNSSSEK). A compositionally biased stretch (acidic residues) spans 1453–1473 (SESESANDSEFDDIEDDEDDE).

The protein belongs to the type II topoisomerase family. As to quaternary structure, homodimer. Mg(2+) is required as a cofactor. Requires Mn(2+) as cofactor. The cofactor is Ca(2+).

It catalyses the reaction ATP-dependent breakage, passage and rejoining of double-stranded DNA.. Its function is as follows. Control of topological states of DNA by transient breakage and subsequent rejoining of DNA strands. Topoisomerase II makes double-strand breaks. In Arabidopsis thaliana (Mouse-ear cress), this protein is DNA topoisomerase 2 (TOP2).